We begin with the raw amino-acid sequence, 360 residues long: C-C chemokine receptor type 2 (360 aa).

Topologically, residues 1 to 42 (MLSTSRSRFIRNTNGSGEEVTTFFDYDYGAPCHKFDVKQIGA) are extracellular. Residue N14 is glycosylated (N-linked (GlcNAc...) asparagine). Residue Y26 is modified to Sulfotyrosine. A helical transmembrane segment spans residues 43 to 70 (QLLPPLYSLVFIFGFVGNMLVVLILINC). Over 71–80 (KKLKSLTDIY) the chain is Cytoplasmic. A helical transmembrane segment spans residues 81 to 100 (LLNLAISDLLFLITLPLWAH). Topologically, residues 101–114 (SAANEWVFGNAMCK) are extracellular. A disulfide bridge links C113 with C190. Residues 115–136 (LFTGLYHIGYLGGIFFIILLTI) form a helical membrane-spanning segment. Topologically, residues 137–153 (DRYLAIVHAVFALKART) are cytoplasmic. Position 139 is a phosphotyrosine; by JAK2 (Y139). The helical transmembrane segment at 154–178 (VTFGVVTSVITWLVAVFASVPGIIF) threads the bilayer. The Extracellular portion of the chain corresponds to 179-206 (TKCQEEDSVYICGPYFPRGWNNFHTIMR). A helical membrane pass occupies residues 207–226 (NILGLVLPLLIMVICYSGIL). Topologically, residues 227–243 (KTLLRCRNEKKRHRAVR) are cytoplasmic. The chain crosses the membrane as a helical span at residues 244–268 (LIFTIMIVYFLFWTPYNIVILLNTF). Residues 269–285 (QEFFGLSNCESTRQLDQ) are Extracellular-facing. A helical membrane pass occupies residues 286-309 (ATQVTETLGMTHCCINPIIYAFVG). At 310–360 (EKFRRYLSMFFRKYITKRFCKQCPVFYRETVDGVTSTNTPSTAEQEVSVGL) the chain is on the cytoplasmic side.

This sequence belongs to the G-protein coupled receptor 1 family. In terms of assembly, interacts with ARRB1. Interacts (via extracellular N-terminal region) with beta-defensin DEFB106A/DEFB106B; this interaction may preferentially require specific tyrosine sulfation on CCR2. Interacts with NUP85; the interaction is required for CCR2 clusters formation on the cell membrane and CCR2 signaling. In terms of processing, N-glycosylated. Post-translationally, sulfation increases the affinity for both monomeric and dimeric CCL2 with stronger binding to the monomeric form. Binding of sulfated CCR2 to CCL2 promotes conversion of CCL2 from dimer to monomer.

It is found in the cell membrane. Its function is as follows. Key functional receptor for CCL2 but can also bind CCL7 and CCL12. Its binding with CCL2 on monocytes and macrophages mediates chemotaxis and migration induction through the activation of the PI3K cascade, the small G protein Rac and lamellipodium protrusion. Also acts as a receptor for the beta-defensin DEFB106A/DEFB106B. Regulates the expression of T-cell inflammatory cytokines and T-cell differentiation, promoting the differentiation of T-cells into T-helper 17 cells (Th17) during inflammation. Facilitates the export of mature thymocytes by enhancing directional movement of thymocytes to sphingosine-1-phosphate stimulation and up-regulation of S1P1R expression; signals through the JAK-STAT pathway to regulate FOXO1 activity leading to an increased expression of S1P1R. Plays an important role in mediating peripheral nerve injury-induced neuropathic pain. Increases NMDA-mediated synaptic transmission in both dopamine D1 and D2 receptor-containing neurons, which may be caused by MAPK/ERK-dependent phosphorylation of GRIN2B/NMDAR2B. Mediates the recruitment of macrophages and monocytes to the injury site following brain injury. The chain is C-C chemokine receptor type 2 (CCR2) from Macaca mulatta (Rhesus macaque).